Reading from the N-terminus, the 171-residue chain is Co-chaperone protein HscB homolog (171 aa).

A J domain is found at Asn-2–Leu-74.

Belongs to the HscB family. In terms of assembly, interacts with HscA and stimulates its ATPase activity.

Its function is as follows. Co-chaperone involved in the maturation of iron-sulfur cluster-containing proteins. Seems to help targeting proteins to be folded toward HscA. The polypeptide is Co-chaperone protein HscB homolog (Vibrio cholerae serotype O1 (strain ATCC 39541 / Classical Ogawa 395 / O395)).